The following is a 317-amino-acid chain: Acetyl-coenzyme A carboxylase carboxyl transferase subunit alpha (317 aa).

The 255-residue stretch at 39-293 (KLEGKAQEAL…GNAIAEAMGS (255 aa)) folds into the CoA carboxyltransferase C-terminal domain.

This sequence belongs to the AccA family. In terms of assembly, acetyl-CoA carboxylase is a heterohexamer composed of biotin carboxyl carrier protein (AccB), biotin carboxylase (AccC) and two subunits each of ACCase subunit alpha (AccA) and ACCase subunit beta (AccD).

The protein localises to the cytoplasm. It catalyses the reaction N(6)-carboxybiotinyl-L-lysyl-[protein] + acetyl-CoA = N(6)-biotinyl-L-lysyl-[protein] + malonyl-CoA. The protein operates within lipid metabolism; malonyl-CoA biosynthesis; malonyl-CoA from acetyl-CoA: step 1/1. Component of the acetyl coenzyme A carboxylase (ACC) complex. First, biotin carboxylase catalyzes the carboxylation of biotin on its carrier protein (BCCP) and then the CO(2) group is transferred by the carboxyltransferase to acetyl-CoA to form malonyl-CoA. The polypeptide is Acetyl-coenzyme A carboxylase carboxyl transferase subunit alpha (Azorhizobium caulinodans (strain ATCC 43989 / DSM 5975 / JCM 20966 / LMG 6465 / NBRC 14845 / NCIMB 13405 / ORS 571)).